Consider the following 472-residue polypeptide: Ras-GEF domain-containing family member 1B (472 aa).

The region spanning 34-164 (QDNNLLSGSL…IIQNLIRKLA (131 aa)) is the N-terminal Ras-GEF domain. In terms of domain architecture, Ras-GEF spans 204 to 452 (DPYTVAQQLT…YLASYESEGP (249 aa)).

Its function is as follows. Guanine nucleotide exchange factor (GEF) with specificity for rap2a and other Ras family proteins (in vitro). In Xenopus tropicalis (Western clawed frog), this protein is Ras-GEF domain-containing family member 1B (rasgef1b).